Consider the following 1146-residue polypeptide: Ankyrin repeat and fibronectin type-III domain-containing protein 1 (1146 aa).

ANK repeat units lie at residues 133–162 and 170–199; these read QGNE…PEEL and EGLT…RESP. Residues 270–366 enclose the Fibronectin type-III domain; sequence MPTNVCLMVT…TTTPACASPS (97 aa). Residues 607 to 614 form a highly conserved peptide sequence region; it reads GLYLGYLK. Disordered stretches follow at residues 855–887, 945–964, and 1106–1146; these read NSTS…QPCS, VKTP…NPDH, and PWAS…SSML. Residues 1131 to 1146 show a composition bias toward polar residues; sequence EGPTASPMSEILSSML.

May play a role in neuronal function. The protein is Ankyrin repeat and fibronectin type-III domain-containing protein 1 of Homo sapiens (Human).